The sequence spans 123 residues: uncharacterized protein (123 aa).

The segment covering 1–12 (MALNNVSLSSGD) has biased composition (polar residues). 2 disordered regions span residues 1 to 25 (MALN…SHGD) and 53 to 91 (PRQA…RFSP). The span at 61–82 (VRAESRRVDGGGRSPREPDGRG) shows a compositional bias: basic and acidic residues.

This is an uncharacterized protein from Homo sapiens (Human).